A 512-amino-acid polypeptide reads, in one-letter code: Cytochrome P450 monooxygenase 208 (512 aa).

Residues 4–24 (LFLVLDTGAAVLLVALLFVVY) traverse the membrane as a helical segment. Position 438 (Cys438) interacts with heme.

Belongs to the cytochrome P450 family. Heme serves as cofactor.

Its subcellular location is the membrane. It participates in secondary metabolite biosynthesis. Its function is as follows. Cytochrome P450 monooxygenase that is able to use 7-ethoxycoumarin as a substrate for oxidation. The polypeptide is Cytochrome P450 monooxygenase 208 (Postia placenta (strain ATCC 44394 / Madison 698-R) (Brown rot fungus)).